Consider the following 152-residue polypeptide: UPF0178 protein YaiI (152 aa).

This sequence belongs to the UPF0178 family.

In Escherichia coli O6:K15:H31 (strain 536 / UPEC), this protein is UPF0178 protein YaiI.